The primary structure comprises 286 residues: uncharacterized protein (286 aa).

The protein belongs to the chlamydial CPn_0389/CT_041/TC_0311 family.

This is an uncharacterized protein from Chlamydia muridarum (strain MoPn / Nigg).